The sequence spans 337 residues: Putative olfactory receptor 1F12P (337 aa).

The Extracellular portion of the chain corresponds to Met-1 to Val-25. 2 N-linked (GlcNAc...) asparagine glycosylation sites follow: Asn-5 and Asn-8. Residues Leu-26–Ile-49 traverse the membrane as a helical segment. Over Gly-50–Thr-57 the chain is Cytoplasmic. Residues Pro-58–Pro-79 form a helical membrane-spanning segment. Residues Lys-80 to Gln-100 are Extracellular-facing. An intrachain disulfide couples Cys-97 to Cys-189. The chain crosses the membrane as a helical span at residues Met-101–Tyr-120. Over Asp-121–Arg-139 the chain is Cytoplasmic. The helical transmembrane segment at Leu-140–Leu-158 threads the bilayer. The Extracellular portion of the chain corresponds to His-159 to Gln-196. The chain crosses the membrane as a helical span at residues Leu-197–Ile-219. At Leu-220–Lys-236 the chain is on the cytoplasmic side. Residues Ala-237 to Tyr-259 form a helical membrane-spanning segment. The Extracellular portion of the chain corresponds to Met-260–Ser-272. A glycan (N-linked (GlcNAc...) asparagine) is linked at Asn-265. The chain crosses the membrane as a helical span at residues Ala-273–Leu-292. The Cytoplasmic segment spans residues Arg-293–Gly-337.

This sequence belongs to the G-protein coupled receptor 1 family.

Its subcellular location is the cell membrane. In terms of biological role, odorant receptor. This chain is Putative olfactory receptor 1F12P, found in Homo sapiens (Human).